The sequence spans 322 residues: Mitochondrial glutamate carrier 1 (322 aa).

Solcar repeat units follow at residues 6–93 (ISLP…FRYQ), 101–214 (LTLF…LNEL), and 223–312 (SPFY…GIAE). 6 helical membrane-spanning segments follow: residues 12-32 (LINGGIAGLIGVTCVFPIDLA), 62-82 (YFGMYRGAAVNLTLVTPEKAI), 107-127 (MLAGCGAGTCQVIVTTPMEML), 189-209 (GLGATLLRDVPFSIVYFPLFA), 223-243 (SPFYVSFLAGCVAGSAAAVAV), and 292-312 (ALVIAPLFGIAQVVYFLGIAE).

The protein belongs to the mitochondrial carrier (TC 2.A.29) family.

Its subcellular location is the mitochondrion inner membrane. It catalyses the reaction L-glutamate(in) + H(+)(in) = L-glutamate(out) + H(+)(out). Its function is as follows. Mitochondrial glutamate/H(+) symporter. Responsible for the transport of glutamate from the cytosol into the mitochondrial matrix with the concomitant import of a proton. Plays a role in the control of glucose-stimulated insulin secretion. The protein is Mitochondrial glutamate carrier 1 (SLC25A22) of Bos taurus (Bovine).